Reading from the N-terminus, the 270-residue chain is Urease accessory protein UreD (270 aa).

This sequence belongs to the UreD family. As to quaternary structure, ureD, UreF and UreG form a complex that acts as a GTP-hydrolysis-dependent molecular chaperone, activating the urease apoprotein by helping to assemble the nickel containing metallocenter of UreC. The UreE protein probably delivers the nickel.

It is found in the cytoplasm. Its function is as follows. Required for maturation of urease via the functional incorporation of the urease nickel metallocenter. The chain is Urease accessory protein UreD from Actinobacillus pleuropneumoniae serotype 3 (strain JL03).